Consider the following 266-residue polypeptide: Phage-like element PBSX protein XkdC (266 aa).

ATP is bound at residue 124–131 (GQPGSGKT).

It to B.subtilis YqaM.

May function as a transcriptional antiterminator. In Bacillus subtilis (strain 168), this protein is Phage-like element PBSX protein XkdC (xkdC).